The sequence spans 81 residues: Putative membrane protein insertion efficiency factor (81 aa).

Belongs to the UPF0161 family.

The protein resides in the cell membrane. In terms of biological role, could be involved in insertion of integral membrane proteins into the membrane. The protein is Putative membrane protein insertion efficiency factor of Geobacillus kaustophilus (strain HTA426).